The primary structure comprises 110 residues: UPF0251 protein PYRAB12660 (110 aa).

This sequence belongs to the UPF0251 family.

The protein is UPF0251 protein PYRAB12660 of Pyrococcus abyssi (strain GE5 / Orsay).